The primary structure comprises 717 residues: Methionine--tRNA ligase (717 aa).

Residues Pro19 to His29 carry the 'HIGH' region motif. 4 residues coordinate Zn(2+): Cys150, Cys153, Cys162, and Cys166. The 'KMSKS' region motif lies at Ala356–Ser360. Thr359 contributes to the ATP binding site. The segment at Glu573 to Asp603 is disordered. A compositionally biased stretch (low complexity) spans Glu580–Gly590. A compositionally biased stretch (acidic residues) spans Ala593 to Asp603. Positions Asp619–Lys717 constitute a tRNA-binding domain.

The protein belongs to the class-I aminoacyl-tRNA synthetase family. MetG type 1 subfamily. Homodimer. Requires Zn(2+) as cofactor.

Its subcellular location is the cytoplasm. The catalysed reaction is tRNA(Met) + L-methionine + ATP = L-methionyl-tRNA(Met) + AMP + diphosphate. Its function is as follows. Is required not only for elongation of protein synthesis but also for the initiation of all mRNA translation through initiator tRNA(fMet) aminoacylation. This chain is Methionine--tRNA ligase, found in Haloarcula marismortui (strain ATCC 43049 / DSM 3752 / JCM 8966 / VKM B-1809) (Halobacterium marismortui).